The chain runs to 373 residues: Probable leucine aminopeptidase 1 (373 aa).

The N-terminal stretch at 1 to 18 (MKLLSVLALSATATSVLG) is a signal peptide. The Zn(2+) site is built by His-176 and Asp-195. A glycan (N-linked (GlcNAc...) asparagine) is linked at Asn-196. 2 residues coordinate Zn(2+): Glu-234 and Asp-261. The N-linked (GlcNAc...) asparagine glycan is linked to Asn-288. A disulfide bridge connects residues Cys-310 and Cys-314. His-343 contributes to the Zn(2+) binding site.

Belongs to the peptidase M28 family. M28E subfamily. Monomer. Zn(2+) serves as cofactor.

It is found in the secreted. Extracellular aminopeptidase which contributes to pathogenicity. In Trichophyton verrucosum (strain HKI 0517), this protein is Probable leucine aminopeptidase 1 (LAP1).